The sequence spans 933 residues: Dual 3',5'-cyclic-AMP and -GMP phosphodiesterase 11A (933 aa).

The interval 42–125 is disordered; it reads HSQGQGALGP…ASQKELRKSF (84 aa). Phosphoserine occurs at positions 162, 163, and 239. 2 consecutive GAF domains span residues 217–370 and 402–558; these read DLTS…GIAI and DLEK…GLGI. Ser-424 is a 3',5'-cyclic GMP binding site. Residues 588-912 form the PDEase domain; it reads SKAEVDKFKA…SKWEELHQKR (325 aa). His-664 functions as the Proton donor in the catalytic mechanism. Residues His-668, His-704, Asp-705, and Asp-816 each contribute to the a divalent metal cation site.

The protein belongs to the cyclic nucleotide phosphodiesterase family. The cofactor is a divalent metal cation. In terms of tissue distribution, isoform 1 is present in prostate, pituitary, heart and liver. It is however not present in testis nor in penis, suggesting that weak inhibition by Tadalafil (Cialis) is not relevant (at protein level). Isoform 2 may be expressed in testis. Isoform 4 is expressed in adrenal cortex.

The protein localises to the cytoplasm. The protein resides in the cytosol. The catalysed reaction is 3',5'-cyclic GMP + H2O = GMP + H(+). It carries out the reaction 3',5'-cyclic AMP + H2O = AMP + H(+). Inhibited by 3-isobutyl-1-methylxanthine (IBMX), zaprinast and dipyridamole. cGMP acts as an allosteric activator. Weakly inhibited by Sildenafil (Viagra) and Tadalafil (Cialis); however, the fact that the protein is probably absent from testis, suggests that it is not biologically relevant and is not related with erectile dysfunction. Its function is as follows. Plays a role in signal transduction by regulating the intracellular concentration of cyclic nucleotides cAMP and cGMP. Catalyzes the hydrolysis of both cAMP and cGMP to 5'-AMP and 5'-GMP, respectively. This is Dual 3',5'-cyclic-AMP and -GMP phosphodiesterase 11A from Homo sapiens (Human).